A 479-amino-acid chain; its full sequence is MSPQTETKASVGFKAGVKDYKLTYYTPEYETKDTDILAAFRVTPQPGVPPEEAGAAVAAESSTGTWTTVWTDGLTSLDRYKGRCYHIEPVVGEENQYIAYVAYPLDLFEEGSVTNMFTSIVGNVFGFKALRALRLEDLRIPTSYSKTFQGPPHGIQVERDKLNKYGRPLLGCTIKPKLGLSAKNYGRAVYECLRGGLDFTKDDENVNSQPFMRWRDRFVFCAEAIYKAQAETGEIKGHYLNATAGTCEEMIKRAVFARELGVPIVMHDYLTGGFTANTSLAHYCRDNGLLLHIHRAMHAVIDRQKNHGMHFRVLAKALRMSGGDHIHAGTVVGKLEGEREMTLGFVDLLRDDFIEKDRSRGIFFTQDWVSMPGVIPVASGGIHVWHMPALTEIFGDDSVLQFGGGTLGHPWGNAPGAVANRVALEACVQARNEGRDLAREGAEIIREASKWSPELAAACEVWKQIKFDFEPVDKLDKTK.

A propeptide spanning residues Met1–Ser2 is cleaved from the precursor. Pro3 bears the N-acetylproline mark. Residue Lys14 is modified to N6,N6,N6-trimethyllysine. Substrate-binding residues include Asn123 and Thr173. Lys175 serves as the catalytic Proton acceptor. Lys177 contacts substrate. Mg(2+) is bound by residues Lys201, Asp203, and Glu204. Lys201 is subject to N6-carboxylysine. Catalysis depends on His294, which acts as the Proton acceptor. Positions 295, 327, and 379 each coordinate substrate.

This sequence belongs to the RuBisCO large chain family. Type I subfamily. In terms of assembly, heterohexadecamer of 8 large chains and 8 small chains; disulfide-linked. The disulfide link is formed within the large subunit homodimers. Mg(2+) serves as cofactor. Post-translationally, the disulfide bond which can form in the large chain dimeric partners within the hexadecamer appears to be associated with oxidative stress and protein turnover.

The protein localises to the plastid. Its subcellular location is the chloroplast. It catalyses the reaction 2 (2R)-3-phosphoglycerate + 2 H(+) = D-ribulose 1,5-bisphosphate + CO2 + H2O. The catalysed reaction is D-ribulose 1,5-bisphosphate + O2 = 2-phosphoglycolate + (2R)-3-phosphoglycerate + 2 H(+). RuBisCO catalyzes two reactions: the carboxylation of D-ribulose 1,5-bisphosphate, the primary event in carbon dioxide fixation, as well as the oxidative fragmentation of the pentose substrate in the photorespiration process. Both reactions occur simultaneously and in competition at the same active site. The polypeptide is Ribulose bisphosphate carboxylase large chain (Ananas comosus (Pineapple)).